The sequence spans 355 residues: uncharacterized protein (355 aa).

An N-terminal signal peptide occupies residues 1 to 22 (MRLTHVTACICLLVAVAVLFSG).

It belongs to the bacterial solute-binding protein 1 family. WtpA subfamily.

This is an uncharacterized protein from Methanoculleus marisnigri (strain ATCC 35101 / DSM 1498 / JR1).